Reading from the N-terminus, the 181-residue chain is Transmembrane protein 47 (181 aa).

At Ala2 the chain carries N-acetylalanine. 4 helical membrane passes run 21-41 (LVGL…VLSP), 83-103 (ALLL…LISI), 115-135 (VAVM…LYPI), and 152-172 (GYGL…LYCL).

It belongs to the TMEM47 family. In terms of assembly, interacts with CTNNB1, CTNNA1, PRKCI, PARD6B, FYB1. In terms of tissue distribution, expressed in adult brain, fetal brain, cerebellum, heart, lung, prostate and thyroid.

The protein localises to the membrane. Its subcellular location is the cell junction. It localises to the adherens junction. Regulates cell junction organization in epithelial cells. May play a role in the transition from adherens junction to tight junction assembly. May regulate F-actin polymerization required for tight junctional localization dynamics and affect the junctional localization of PARD6B. During podocyte differentiation may negatively regulate activity of FYN and subsequently the abundance of nephrin. This is Transmembrane protein 47 (TMEM47) from Homo sapiens (Human).